The sequence spans 160 residues: Epithelial membrane protein 1 (160 aa).

Residues 1–21 form a helical membrane-spanning segment; it reads MLVLLAGLFVVHIATAIMLFV. N43 carries N-linked (GlcNAc...) asparagine glycosylation. The next 3 membrane-spanning stretches (helical) occupy residues 67-87, 95-115, and 137-157; these read FMILSIIFSIISLVVFVFQLF, FFLSGSTMLVCWLCILIGVSI, and FILTWICFCFSFIIGILYMVL.

Belongs to the PMP-22/EMP/MP20 family. As to expression, most prominently found in the gastrointestinal tract, skin, lung, and brain but not in liver.

It localises to the membrane. The protein is Epithelial membrane protein 1 (Emp1) of Rattus norvegicus (Rat).